Reading from the N-terminus, the 835-residue chain is Phenylalanine--tRNA ligase beta subunit (835 aa).

Positions 44–160 constitute a tRNA-binding domain; it reads PETTGPLVFG…SYGEPGEDAR (117 aa). In terms of domain architecture, B5 spans 419–494; the sequence is PAMQPITMKV…RLEGLEAIPT (76 aa). 4 residues coordinate Mg(2+): Asp472, Asp478, Glu481, and Glu482. In terms of domain architecture, FDX-ACB spans 741–834; that stretch reads SSFPALHQDI…AKEKFNAEMR (94 aa).

This sequence belongs to the phenylalanyl-tRNA synthetase beta subunit family. Type 1 subfamily. In terms of assembly, tetramer of two alpha and two beta subunits. Mg(2+) is required as a cofactor.

The protein localises to the cytoplasm. It carries out the reaction tRNA(Phe) + L-phenylalanine + ATP = L-phenylalanyl-tRNA(Phe) + AMP + diphosphate + H(+). The polypeptide is Phenylalanine--tRNA ligase beta subunit (Corynebacterium glutamicum (strain ATCC 13032 / DSM 20300 / JCM 1318 / BCRC 11384 / CCUG 27702 / LMG 3730 / NBRC 12168 / NCIMB 10025 / NRRL B-2784 / 534)).